Here is a 388-residue protein sequence, read N- to C-terminus: MAFQLTPLRVALVAGEPSGDLLGASLLGGLHARLPASSRYYGIGGPRMSAVEFDAHWPMEKLAVRGYVEALKHIPEILRIRGELKRQLLAEPPDAFVGIDAPDFNFGLEQALRGAGIPTIHFVCPSIWAWRGGRIKKIVKAVDHMLCLFPFEPELLEKAGVAATFVGHPLADEIPLEPDTHGARIALGLPGGGPVIAVLPGSRRSEIELIGPTFFDAMELMQQREPGVRFVVPAATPALRALLQPLVDAHPSLSVTLTEGRAQVAMTAADAILVKSGTVTLEAALLKKPMVISYKVPWLTGQIMRRQGYLPYVGLPNILAGRFVVPELLQHFATPDALADATLTQLRDDANRRALADIFTDMHLALRQNTAQRAAEAVAHVIDSRKPR.

It belongs to the LpxB family.

The enzyme catalyses a lipid X + a UDP-2-N,3-O-bis[(3R)-3-hydroxyacyl]-alpha-D-glucosamine = a lipid A disaccharide + UDP + H(+). It participates in bacterial outer membrane biogenesis; LPS lipid A biosynthesis. Functionally, condensation of UDP-2,3-diacylglucosamine and 2,3-diacylglucosamine-1-phosphate to form lipid A disaccharide, a precursor of lipid A, a phosphorylated glycolipid that anchors the lipopolysaccharide to the outer membrane of the cell. The chain is Lipid-A-disaccharide synthase from Burkholderia mallei (strain ATCC 23344).